The primary structure comprises 766 residues: MASDTPESLMALCTDFCLRNLDGTLGYLLDKETLRLHPDIFLPSEICDRLVNEYVELVNAACNFEPHESFFSLFSDPRSTRLTRIHLREDLVQDQDLEAIRKQDLVELYLTNCEKLSAKSLQTLRSFSHTLVSLSLFGCTNIFYEEENPGGCEDEYLVNPTCQVLVKDFTFEGFSRLRFLNLGRMIDWVPVESLLRPLNSLAALDLSGIQTSDAAFLTQWKDSLVSLVLYNMDLSDDHIRVIVQLHKLRHLDISRDRLSSYYKFKLTREVLSLFVQKLGNLMSLDISGHMILENCSISKMEEEAGQTSIEPSKSSIIPFRALKRPLQFLGLFENSLCRLTHIPAYKVSGDKNEEQVLNAIEAYTEHRPEITSRAINLLFDIARIERCNQLLRALKLVITALKCHKYDRNIQVTGSAALFYLTNSEYRSEQSVKLRRQVIQVVLNGMESYQEVTVQRNCCLTLCNFGIPEELEFQYRRVNELLLSILNPTRQDESIQRIAVHLCNALVCQVDNDHKEAVGKMGFVVTMLKLIQKKLLDKICDQVMEFSWSALWNITDETPDNCEMFLNFNGMKLFLDCLKEFPEKQELHRNMLGLLGNVAEVKELRPQLMTSQFISVFSNLLESKADGIEVSYNACGVLSHIMFDGPEAWGVCEPQREEVEERMWAAIQSWDINSRRNINYRSFEPILRLLPQGISPVSQHWATWALYNLVSVYPDKYCPLLIKEGGMPLLRDIIKMATARQETKEMARKVIEHCSNFKEENMDTSR.

Alanine 2 is subject to N-acetylalanine. 3 LRR repeats span residues 226–245 (SLVLYNMDLSDDHIRVIVQL), 246–268 (HKLRHLDISRDRLSSYYKFKLTR), and 278–302 (LGNLMSLDISGHMILENCSISKMEE). ARM repeat units lie at residues 427 to 467 (RSEQ…NFGI), 511 to 556 (DNDH…NITD), 558 to 600 (TPDN…NVAE), 602 to 643 (KELR…HIMF), and 714 to 756 (PDKY…HCSN).

This sequence belongs to the zyg-11 family. In terms of assembly, interacts with the ELOC-ELOB/Elongin BC complex. Part of an E3 ubiquitin ligase complex including ZER1, CUL2 and Elongin BC.

Its function is as follows. Serves as substrate adapter subunit in the E3 ubiquitin ligase complex ZYG11B-CUL2-Elongin BC. Acts redudantly with ZYG11B to target substrates bearing N-terminal glycine degrons for proteasomal degradation. Involved in the clearance of proteolytic fragments generated by caspase cleavage during apoptosis since N-terminal glycine degrons are strongly enriched at caspase cleavage sites. Also important in the quality control of protein N-myristoylation in which N-terminal glycine degrons are conditionally exposed after a failure of N-myristoylation. The chain is Protein zer-1 homolog (ZER1) from Pongo abelii (Sumatran orangutan).